The following is a 101-amino-acid chain: Protein S100-A7-like 2 (101 aa).

2 consecutive EF-hand domains span residues 13–48 (IVAM…SGCE) and 50–85 (SDMD…ITID). Ca(2+)-binding residues include D63, N65, D67, K69, and E74. 2 residues coordinate Zn(2+): H87 and H91.

This sequence belongs to the S-100 family.

The chain is Protein S100-A7-like 2 (S100A7L2) from Homo sapiens (Human).